Reading from the N-terminus, the 394-residue chain is Queuine tRNA-ribosyltransferase accessory subunit 2 (394 aa).

The Zn(2+) site is built by cysteine 336, cysteine 338, cysteine 341, and histidine 367.

It belongs to the queuine tRNA-ribosyltransferase family. QTRT2 subfamily. In terms of assembly, heterodimer of a catalytic subunit and an accessory subunit. Zn(2+) serves as cofactor.

It is found in the cytoplasm. In terms of biological role, non-catalytic subunit of the queuine tRNA-ribosyltransferase (TGT) that catalyzes the base-exchange of a guanine (G) residue with queuine (Q) at position 34 (anticodon wobble position) in tRNAs with GU(N) anticodons (tRNA-Asp, -Asn, -His and -Tyr), resulting in the hypermodified nucleoside queuosine (7-(((4,5-cis-dihydroxy-2-cyclopenten-1-yl)amino)methyl)-7-deazaguanosine). The chain is Queuine tRNA-ribosyltransferase accessory subunit 2 from Ixodes scapularis (Black-legged tick).